The primary structure comprises 159 residues: Allergen Arg r 1 (159 aa).

An N-terminal signal peptide occupies residues 1–16 (MALIILLVACLSVVSA). 2 disulfides stabilise this stretch: cysteine 50–cysteine 155 and cysteine 109–cysteine 134.

It belongs to the calycin superfamily. Histamine-binding salivary protein family. Post-translationally, not glycosylated.

The protein resides in the secreted. The chain is Allergen Arg r 1 from Argas reflexus (European pigeon tick).